A 191-amino-acid polypeptide reads, in one-letter code: Transcriptional activator GvpE1 (191 aa).

The tract at residues 31–51 is disordered; the sequence is SDGASDHADQPPDEGATQRYT. 140-145 is a DNA binding site; sequence KRKVYR. The segment at 150–181 is leucine-zipper; the sequence is EGAFTRIDHMVDQLLLFSLVLKAVMTDCKARQ.

Interacts with GvpD.

The protein resides in the cytoplasm. The amount of protein that accumulates is controlled by GvpD; GvpD causes a reduction in the amount of GvpE, preventing accumulation of excessive amounts of gas vesicles. Its function is as follows. Plays a regulatory role in gas vesicle synthesis, activates transcription of the gvpA operon, and probably of the gvpD operon. Gas vesicles are hollow, gas filled proteinaceous nanostructures found in several microbial planktonic microorganisms. They allow positioning of halobacteria at the optimal depth for growth in the poorly aerated, shallow brine pools of their habitat. Expression of a 9.5 kb p-vac DNA fragment containing 2 divergently transcribed regions (gvpD-gvpE-gvpF-gvpG-gvpH-gvpI-gvpJ-gvpK-gvpL-gvpM and gvpA-gvpC-gvpN-gvpO) allows H.volcanii to produce gas vesicles. A similar region restores gas vesicle production in H.halobium without the p-vac locus, but it still has the c-vac locus. In Halobacterium salinarum (strain ATCC 700922 / JCM 11081 / NRC-1) (Halobacterium halobium), this protein is Transcriptional activator GvpE1 (gvpE11).